A 154-amino-acid chain; its full sequence is MSNQMNTMDITEILKYLPHRYPFLLIDRVLDYTPGESLHAIKNVTINEPFFQGHFPVQPVMPGVLILEAMAQATGLLAFKTMSDDVPPPGVLYYFAGIDNARFRRVVEPGDQIHFDVKMIKERRGIGVFYGEAKVDGEVVCSAEIMCARREINQ.

His-54 is a catalytic residue.

Belongs to the thioester dehydratase family. FabZ subfamily.

It localises to the cytoplasm. The enzyme catalyses a (3R)-hydroxyacyl-[ACP] = a (2E)-enoyl-[ACP] + H2O. Functionally, involved in unsaturated fatty acids biosynthesis. Catalyzes the dehydration of short chain beta-hydroxyacyl-ACPs and long chain saturated and unsaturated beta-hydroxyacyl-ACPs. This chain is 3-hydroxyacyl-[acyl-carrier-protein] dehydratase FabZ, found in Shewanella sp. (strain MR-4).